Reading from the N-terminus, the 372-residue chain is Putative KilA-N domain-containing protein L32 (372 aa).

Over residues 1–12 (MPHKAPKSKLFR) the composition is skewed to basic residues. Residues 1–129 (MPHKAPKSKL…SDNDKSKDNF (129 aa)) are disordered. Positions 14–36 (RYVEDSDDETRGRSRNRSVEKSR) are enriched in basic and acidic residues. Positions 37 to 53 (SKSLTRSKSKSPKKSRS) are enriched in basic residues. A compositionally biased stretch (acidic residues) spans 79 to 120 (EDSEDSEDSESDQDDDKSDNEQSDSELDDSESDDDETDDNES). The region spanning 151–255 (KFAIGKFGDF…IKIGEWIEEW (105 aa)) is the KilA-N domain.

The polypeptide is Putative KilA-N domain-containing protein L32 (Acanthamoeba polyphaga (Amoeba)).